The primary structure comprises 278 residues: Ankyrin repeat and SOCS box protein 13 (278 aa).

ANK repeat units lie at residues 18 to 47 (VERT…CVNQ), 51 to 80 (DSIT…QVDA), 84 to 113 (DGST…KVNP), 116 to 145 (YTAS…NLEA), 149 to 178 (HFGT…NVNA), and 181 to 210 (LHET…NIYA). The SOCS box domain occupies 229–278 (AKCFEYYEKTPLTLSQLCRVNLRKATGVRGLEKIAKLNIPPRLIDYLSYN).

The protein belongs to the ankyrin SOCS box (ASB) family.

It functions in the pathway protein modification; protein ubiquitination. May be a substrate-recognition component of a SCF-like ECS (Elongin-Cullin-SOCS-box protein) E3 ubiquitin-protein ligase complex which mediates the ubiquitination and subsequent proteasomal degradation of target proteins. The polypeptide is Ankyrin repeat and SOCS box protein 13 (ASB13) (Homo sapiens (Human)).